We begin with the raw amino-acid sequence, 251 residues long: HTH-type transcriptional regulator UlaR (251 aa).

The 56-residue stretch at 3–58 (EAQRHQILLEMLAQLGFVTVEKVVERLGISPATARRDINKLDERGKLKKVRNGAEA) folds into the HTH deoR-type domain. A DNA-binding region (H-T-H motif) is located at residues 20-39 (VTVEKVVERLGISPATARRD).

It localises to the cytoplasm. Represses ulaG and the ulaABCDEF operon. In Shigella sonnei (strain Ss046), this protein is HTH-type transcriptional regulator UlaR.